A 147-amino-acid chain; its full sequence is MKSLKKQRRIQVIILATVALVLATGLIGYAMRDGINFFRAPSDIIAEPPQPSETFRIGGLVEDGTLVRGQGETVRFSVTDGGASVPVVFTGVLPDLFAENQGMIGTGRYVNGVFEASEILAKHDETYMPKEVMDALKEQGVYQAPES.

Residues 1–9 are Cytoplasmic-facing; it reads MKSLKKQRR. Residues 10–30 form a helical; Signal-anchor for type II membrane protein membrane-spanning segment; that stretch reads IQVIILATVALVLATGLIGYA. Topologically, residues 31–147 are periplasmic; that stretch reads MRDGINFFRA…EQGVYQAPES (117 aa). 2 residues coordinate heme: His-123 and Tyr-127.

Belongs to the CcmE/CycJ family.

It localises to the cell inner membrane. Heme chaperone required for the biogenesis of c-type cytochromes. Transiently binds heme delivered by CcmC and transfers the heme to apo-cytochromes in a process facilitated by CcmF and CcmH. The polypeptide is Cytochrome c-type biogenesis protein CcmE 1 (Ruegeria pomeroyi (strain ATCC 700808 / DSM 15171 / DSS-3) (Silicibacter pomeroyi)).